Consider the following 289-residue polypeptide: 4-diphosphocytidyl-2-C-methyl-D-erythritol kinase (289 aa).

The active site involves Lys-16. Position 99–109 (Pro-99–Ser-109) interacts with ATP. The active site involves Asp-141.

It belongs to the GHMP kinase family. IspE subfamily.

The enzyme catalyses 4-CDP-2-C-methyl-D-erythritol + ATP = 4-CDP-2-C-methyl-D-erythritol 2-phosphate + ADP + H(+). It participates in isoprenoid biosynthesis; isopentenyl diphosphate biosynthesis via DXP pathway; isopentenyl diphosphate from 1-deoxy-D-xylulose 5-phosphate: step 3/6. In terms of biological role, catalyzes the phosphorylation of the position 2 hydroxy group of 4-diphosphocytidyl-2C-methyl-D-erythritol. The polypeptide is 4-diphosphocytidyl-2-C-methyl-D-erythritol kinase (Ralstonia nicotianae (strain ATCC BAA-1114 / GMI1000) (Ralstonia solanacearum)).